Here is a 131-residue protein sequence, read N- to C-terminus: Small ribosomal subunit protein uS8 (131 aa).

The protein belongs to the universal ribosomal protein uS8 family. In terms of assembly, part of the 30S ribosomal subunit. Contacts proteins S5 and S12.

Its function is as follows. One of the primary rRNA binding proteins, it binds directly to 16S rRNA central domain where it helps coordinate assembly of the platform of the 30S subunit. In Parabacteroides distasonis (strain ATCC 8503 / DSM 20701 / CIP 104284 / JCM 5825 / NCTC 11152), this protein is Small ribosomal subunit protein uS8.